The chain runs to 430 residues: Enolase (430 aa).

Position 168 (glutamine 168) interacts with (2R)-2-phosphoglycerate. The active-site Proton donor is the glutamate 210. Mg(2+) is bound by residues aspartate 247, glutamate 288, and aspartate 315. Residues lysine 340, arginine 369, serine 370, and lysine 391 each contribute to the (2R)-2-phosphoglycerate site. The active-site Proton acceptor is lysine 340.

It belongs to the enolase family. The cofactor is Mg(2+).

Its subcellular location is the cytoplasm. The protein localises to the secreted. The protein resides in the cell surface. It carries out the reaction (2R)-2-phosphoglycerate = phosphoenolpyruvate + H2O. The protein operates within carbohydrate degradation; glycolysis; pyruvate from D-glyceraldehyde 3-phosphate: step 4/5. In terms of biological role, catalyzes the reversible conversion of 2-phosphoglycerate (2-PG) into phosphoenolpyruvate (PEP). It is essential for the degradation of carbohydrates via glycolysis. The sequence is that of Enolase from Picosynechococcus sp. (strain ATCC 27264 / PCC 7002 / PR-6) (Agmenellum quadruplicatum).